A 571-amino-acid chain; its full sequence is Apolipoprotein N-acyltransferase (571 aa).

A run of 6 helical transmembrane segments spans residues 13–33 (VVLW…IALV), 51–68 (LYAA…GLRY), 72–92 (LMFL…VLFI), 118–138 (LVAA…FTGI), 152–172 (MLIQ…IVCV), and 199–219 (LVTA…SMNA). In terms of domain architecture, CN hydrolase spans 234 to 527 (NELTVYEQDI…SDVIYAQPRR (294 aa)). Residue Glu-275 is the Proton acceptor of the active site. Lys-380 is a catalytic residue. The active-site Nucleophile is the Cys-430. Residues 542 to 562 (AGLMGAATLCGLAWMTFEWLM) traverse the membrane as a helical segment.

The protein belongs to the CN hydrolase family. Apolipoprotein N-acyltransferase subfamily.

It is found in the cell inner membrane. The enzyme catalyses N-terminal S-1,2-diacyl-sn-glyceryl-L-cysteinyl-[lipoprotein] + a glycerophospholipid = N-acyl-S-1,2-diacyl-sn-glyceryl-L-cysteinyl-[lipoprotein] + a 2-acyl-sn-glycero-3-phospholipid + H(+). The protein operates within protein modification; lipoprotein biosynthesis (N-acyl transfer). Its function is as follows. Catalyzes the phospholipid dependent N-acylation of the N-terminal cysteine of apolipoprotein, the last step in lipoprotein maturation. This chain is Apolipoprotein N-acyltransferase, found in Rhodopirellula baltica (strain DSM 10527 / NCIMB 13988 / SH1).